A 546-amino-acid polypeptide reads, in one-letter code: Chaperonin GroEL (546 aa).

Residues 30–33 (TLGP), Lys-51, 87–91 (DGTTT), Gly-415, 479–481 (NAA), and Asp-495 each bind ATP. Residues 526–546 (KEDAPMPGGMPGGMGGMGMDM) are disordered. The span at 534 to 546 (GMPGGMGGMGMDM) shows a compositional bias: gly residues.

It belongs to the chaperonin (HSP60) family. In terms of assembly, forms a cylinder of 14 subunits composed of two heptameric rings stacked back-to-back. Interacts with the co-chaperonin GroES.

The protein localises to the cytoplasm. The enzyme catalyses ATP + H2O + a folded polypeptide = ADP + phosphate + an unfolded polypeptide.. In terms of biological role, together with its co-chaperonin GroES, plays an essential role in assisting protein folding. The GroEL-GroES system forms a nano-cage that allows encapsulation of the non-native substrate proteins and provides a physical environment optimized to promote and accelerate protein folding. In Burkholderia cepacia (Pseudomonas cepacia), this protein is Chaperonin GroEL.